A 210-amino-acid chain; its full sequence is Acetoin utilization protein AcuA (210 aa).

The N-acetyltransferase domain occupies 19-189; the sequence is VLIEGPISPE…ANCLMARIGK (171 aa).

It belongs to the acetyltransferase family. In terms of assembly, monomer.

It functions in the pathway ketone degradation; acetoin degradation. In terms of biological role, part of the acuABC operon, which is possibly involved in the breakdown of acetoin and butanediol. Acts as an acetyltransferase inactivating acetyl-CoA synthetase AcsA via acetylation at a Lys residue. This chain is Acetoin utilization protein AcuA, found in Bacillus licheniformis (strain ATCC 14580 / DSM 13 / JCM 2505 / CCUG 7422 / NBRC 12200 / NCIMB 9375 / NCTC 10341 / NRRL NRS-1264 / Gibson 46).